Consider the following 595-residue polypeptide: ATPase family AAA domain-containing protein 3 (595 aa).

Residues 1-48 (MSWLFGVQKNATPQIPDDFQAGAAPGGPQQPGQGQRQEGNSKMAYSFD) form a disordered region. The Mitochondrial intermembrane segment spans residues 1 to 243 (MSWLFGVQKN…LNQFLNDKTK (243 aa)). The span at 20-35 (QAGAAPGGPQQPGQGQ) shows a compositional bias: low complexity. Coiled-coil stretches lie at residues 80 to 107 (VTRQ…HIRV) and 140 to 175 (EELA…EHEL). Residues 244–260 (IAAAVGGLTALAVGWYT) form a helical membrane-spanning segment. Topologically, residues 261–595 (AKRGTGVTAR…GTTLKRETAV (335 aa)) are mitochondrial matrix. 349–356 (GPPGTGKT) provides a ligand contact to ATP. Positions 592–595 (ETAV) match the PDZ-binding motif.

It belongs to the AAA ATPase family.

The protein localises to the mitochondrion inner membrane. The protein resides in the mitochondrion matrix. It is found in the mitochondrion nucleoid. Essential for mitochondrial network organization, mitochondrial metabolism and cell growth at organism and cellular level. Important during development for the up-regulation of mitochondrial activity during the transition to higher larval stages. Regulates mitochondrial iron homeostasis. May play an important role in mitochondrial protein synthesis. May also participate in mitochondrial DNA replication. May bind to mitochondrial DNA D-loops and contribute to nucleoid stability. Plays a role in regulating the production of reactive oxygen species in response to heat stress. This is ATPase family AAA domain-containing protein 3 from Caenorhabditis elegans.